Consider the following 180-residue polypeptide: Large ribosomal subunit protein eL18 (180 aa).

The interval 152-180 (FGPAPGVPGSHTKPYVISKSRERTNAHRA) is disordered. A compositionally biased stretch (basic and acidic residues) spans 170–180 (KSRERTNAHRA).

The protein belongs to the eukaryotic ribosomal protein eL18 family.

The protein resides in the cytoplasm. This chain is Large ribosomal subunit protein eL18 (RPL18), found in Taenia asiatica (Asian tapeworm).